The following is a 78-amino-acid chain: Acyl carrier protein (78 aa).

One can recognise a Carrier domain in the interval 2 to 77; the sequence is STIEESVKAI…AAIDFIQASQ (76 aa). S37 carries the O-(pantetheine 4'-phosphoryl)serine modification.

It belongs to the acyl carrier protein (ACP) family. 4'-phosphopantetheine is transferred from CoA to a specific serine of apo-ACP by AcpS. This modification is essential for activity because fatty acids are bound in thioester linkage to the sulfhydryl of the prosthetic group.

The protein localises to the cytoplasm. It participates in lipid metabolism; fatty acid biosynthesis. Functionally, carrier of the growing fatty acid chain in fatty acid biosynthesis. The polypeptide is Acyl carrier protein (Sodalis glossinidius (strain morsitans)).